The following is a 183-amino-acid chain: Capsid protein (183 aa).

A disordered region spans residues 136–183 (NAPILSTLPETTVVRRRGRSPRRRTPSPRRRRSQSPRRRRSQSRESQC). A compositionally biased stretch (basic residues) spans 149 to 176 (VRRRGRSPRRRTPSPRRRRSQSPRRRRS). Phosphoserine; by host occurs at positions 155, 162, and 170. One copy of the 1; half-length repeat lies at 155–161 (SPRRRTP). A 3 X 8 AA repeats of S-P-R-R-R-[PR]-S-Q region spans residues 155-177 (SPRRRTPSPRRRRSQSPRRRRSQ). The short motif at 158–175 (RRTPSPRRRRSQSPRRRR) is the Bipartite nuclear localization signal element. 2 tandem repeats follow at residues 162-169 (SPRRRRSQ) and 170-177 (SPRRRRSQ). The tract at residues 177–183 (QSRESQC) is RNA binding.

Belongs to the orthohepadnavirus core antigen family. Homodimerizes, then multimerizes. Interacts with cytosol exposed regions of viral L glycoprotein present in the reticulum-to-Golgi compartment. Interacts with human FLNB. Phosphorylated form interacts with host importin alpha; this interaction depends on the exposure of the NLS, which itself depends upon genome maturation and/or phosphorylation of the capsid protein. Interacts with host NUP153. Phosphorylated by host SRPK1, SRPK2, and maybe protein kinase C or GAPDH. Phosphorylation is critical for pregenomic RNA packaging. Protein kinase C phosphorylation is stimulated by HBx protein and may play a role in transport of the viral genome to the nucleus at the late step during the viral replication cycle.

The protein resides in the virion. The protein localises to the host cytoplasm. Functionally, self assembles to form an icosahedral capsid. Most capsids appear to be large particles with an icosahedral symmetry of T=4 and consist of 240 copies of capsid protein, though a fraction forms smaller T=3 particles consisting of 180 capsid proteins. Entering capsids are transported along microtubules to the nucleus. Phosphorylation of the capsid is thought to induce exposure of nuclear localization signal in the C-terminal portion of the capsid protein that allows binding to the nuclear pore complex via the importin (karyopherin-) alpha and beta. Capsids are imported in intact form through the nuclear pore into the nuclear basket, where it probably binds NUP153. Only capsids that contain the mature viral genome can release the viral DNA and capsid protein into the nucleoplasm. Immature capsids get stuck in the basket. Capsids encapsulate the pre-genomic RNA and the P protein. Pre-genomic RNA is reverse-transcribed into DNA while the capsid is still in the cytoplasm. The capsid can then either be directed to the nucleus, providing more genomes for transcription, or bud through the endoplasmic reticulum to provide new virions. This is Capsid protein from Homo sapiens (Human).